The sequence spans 765 residues: Endosialin (765 aa).

An N-terminal signal peptide occupies residues 1–17 (MLLRLLLAWVAAVPALG). The Extracellular segment spans residues 18-695 (QVPWTPEPRA…GQSQRDDRWL (678 aa)). One can recognise a C-type lectin domain in the interval 30–156 (GPSSCYALFP…CTLAVDGYLC (127 aa)). 6 disulfides stabilise this stretch: Cys131-Cys147, Cys164-Cys213, Cys203-Cys230, Cys316-Cys326, Cys322-Cys335, and Cys337-Cys350. The 71-residue stretch at 162–232 (GACPALPLEV…WSQTGPLCPG (71 aa)) folds into the Sushi domain. Residues 312–351 (DTDECQIAGVCQQMCVNYVGGFECYCSEGHELEADGISCS) form the EGF-like; calcium-binding domain. O-linked (GalNAc...) threonine glycosylation is found at Thr401, Thr428, Thr448, Thr456, Thr459, and Thr466. 2 O-linked (GalNAc...) serine glycosylation sites follow: Ser467 and Ser470. Thr472 carries O-linked (GalNAc...) threonine glycosylation. The O-linked (GalNAc...) serine glycan is linked to Ser477. Residues Thr488, Thr517, Thr520, Thr535, Thr552, Thr554, Thr556, Thr570, Thr571, Thr604, and Thr613 are each glycosylated (O-linked (GalNAc...) threonine). A disordered region spans residues 548-675 (MSPDTHTITY…QLPSVPSTAA (128 aa)). A compositionally biased stretch (pro residues) spans 622 to 633 (PAFPSSPLPPQR). 2 O-linked (GalNAc...) serine glycosylation sites follow: Ser626 and Ser627. O-linked (GalNAc...) threonine glycans are attached at residues Thr635 and Thr638. Residues 635–647 (TNQTSSISPTHSY) show a composition bias toward polar residues. O-linked (GalNAc...) serine glycans are attached at residues Ser639 and Ser640. Thr644 carries an O-linked (GalNAc...) threonine glycan. The O-linked (GalNAc...) serine glycan is linked to Ser663. O-linked (GalNAc...) threonine glycosylation occurs at Thr673. The helical transmembrane segment at 696–716 (LVALLVPTCVFLVVLLALGIV) threads the bilayer. At 717–765 (YCTRCGSHAPNKRITDCYRWVTHAGNKSSTEPMPPRGSLTGVQTCRTSV) the chain is on the cytoplasmic side. Phosphoserine is present on Ser754.

As to quaternary structure, interacts with PDGFRA; this interaction promotes PDGF receptor signaling pathway. Interacts with integrin beta-1/ITGB1. Interacts with insulin receptor/INSR; this interaction diminishes INSR autophosphorylation. O-glycosylated by sialylated oligosaccharides. In terms of processing, may be N-glycosylated. In terms of tissue distribution, expressed in cell lines derived from endothelial cells, embryonic fibroblasts and preadipocytes. Expressed in skeletal muscle by a subset of pericytes.

Its subcellular location is the membrane. Cell surface glycoprotein involved in various biological processes including angiogenesis, immune response modulation, and tissue remodeling and repair. Participates in pericyte proliferation through positive modulation of the PDGF receptor signaling pathway. Acts as a scaffold for factor X, triggering allosteric changes and the spatial re-alignment of factor X with the TF-factor VIIa complex, thereby enhancing coagulation activation. Modulates the insulin signaling pathway by interacting with insulin receptor/INSR and by diminishing its capacity to be autophosphorylated in response to insulin. Also regulates LPS-induced inflammatory responses in macrophages by favoring production of proinflammatory cytokines. This Mus musculus (Mouse) protein is Endosialin (Cd248).